The chain runs to 312 residues: Olfactory receptor-like protein COR5 (312 aa).

At 1 to 26 (MALGNCTTPTTFILSGLTDNPRLQMP) the chain is on the extracellular side. An N-linked (GlcNAc...) asparagine glycan is attached at Asn-5. Residues 27 to 49 (LFMVFLAIYTITLLANLGLIALI) form a helical membrane-spanning segment. Residues 50–57 (SVDFHLQT) lie on the Cytoplasmic side of the membrane. A helical membrane pass occupies residues 58 to 79 (PMYIFLQNLSFTDAAYSTVITP). The Extracellular portion of the chain corresponds to 80–100 (KMLATFLEERRTISYVGCILQ). An intrachain disulfide couples Cys-97 to Cys-179. Residues 101–120 (YFSFVLLTSSECLLLAVMAY) form a helical membrane-spanning segment. Residues 121–139 (DRYVAICKPLLYPAIMTKA) lie on the Cytoplasmic side of the membrane. A helical membrane pass occupies residues 140–164 (VCWRLVEGLYSLAFLNSLVHTSGLL). Over 165–205 (KLSFCSSNVVNHFFCDNSPLFQISSSSTTLNELLVFIFGSW) the chain is Extracellular. A helical transmembrane segment spans residues 206-226 (FAMSSIITTPISYVFIILTVV). The Cytoplasmic segment spans residues 227-239 (RIRSKDGKYKAFS). A helical membrane pass occupies residues 240-260 (TCTSHLMAVSLFHGTVIFMYL). The Extracellular portion of the chain corresponds to 261-271 (RPVKLFSLDTD). The chain crosses the membrane as a helical span at residues 272-292 (KIASLFYTVVIPMLNPLIYSW). Topologically, residues 293–312 (RNKEVKDALRRVIATNVWIH) are cytoplasmic.

The protein belongs to the G-protein coupled receptor 1 family.

Its subcellular location is the cell membrane. In terms of biological role, odorant receptor. The protein is Olfactory receptor-like protein COR5 (COR5) of Gallus gallus (Chicken).